Here is a 118-residue protein sequence, read N- to C-terminus: ATP synthase subunit g, mitochondrial (118 aa).

As to quaternary structure, F-type ATP synthases have 2 components, the catalytic core F(1) and the membrane-embedded component F(0), linked together by a central stalk and a peripheral stalk. The central stalk, also called rotor shaft, is often seen as part of F(1). The peripheral stalk is seen as part of F(0). F(0) contains the membrane channel next to the rotor. F-type ATP synthases form dimers but each monomer functions independently in ATP generation. The dimer consists of 18 different polypeptides: ATP1 (subunit alpha, part of F(1), 3 molecules per monomer), ATP2 (subunit beta, part of F(1), 3 molecules per monomer), ATP3 (subunit gamma, part of the central stalk), ATP4 (subunit b, part of the peripheral stalk), ATP5/OSCP (subunit 5/OSCP, part of the peripheral stalk), ATP6 (subunit a, part of the peripheral stalk), ATP7 (subunit d, part of the peripheral stalk), ATP8 (subunit 8, part of the peripheral stalk), OLI1 (subunit c, part of the rotor, 10 molecules per monomer), ATP14 (subunit h, part of the peripheral stalk), ATP15 (subunit epsilon, part of the central stalk), ATP16 (subunit delta, part of the central stalk), ATP17 (subunit f, part of the peripheral stalk), ATP18 (subunit i/j, part of the peripheral stalk). Dimer-specific subunits are ATP19 (subunit k, at interface between monomers), ATP20 (subunit g, at interface between monomers), TIM11 (subunit e, at interface between monomers). Also contains subunit L.

It is found in the mitochondrion inner membrane. Functionally, mitochondrial membrane ATP synthase (F(1)F(0) ATP synthase or Complex V) produces ATP from ADP in the presence of a proton gradient across the membrane which is generated by electron transport complexes of the respiratory chain. F-type ATP synthases consist of two structural domains, F(1) - containing the extramembraneous catalytic core, and F(0) - containing the membrane proton channel, linked together by a central stalk and a peripheral stalk. During catalysis, ATP synthesis in the catalytic domain of F(1) is coupled via a rotary mechanism of the central stalk subunits to proton translocation. Part of the complex F(0) domain Minor subunit located with subunit a/ATP6 in the membrane. Together with subunit e/TIM11, probably contributes to membrane curvature at the site of the ATP synthase dimer, ultimately contributing to formation of cristae. The polypeptide is ATP synthase subunit g, mitochondrial (Pichia angusta (Yeast)).